Consider the following 82-residue polypeptide: uncharacterized protein (82 aa).

This is an uncharacterized protein from Pigeon circovirus (PiCV).